Reading from the N-terminus, the 153-residue chain is Nucleoside diphosphate kinase (153 aa).

Positions 11, 59, 87, 93, 104, and 114 each coordinate ATP. The active-site Pros-phosphohistidine intermediate is H117.

It belongs to the NDK family. Homotrimer. The cofactor is Mg(2+).

It catalyses the reaction a 2'-deoxyribonucleoside 5'-diphosphate + ATP = a 2'-deoxyribonucleoside 5'-triphosphate + ADP. The enzyme catalyses a ribonucleoside 5'-diphosphate + ATP = a ribonucleoside 5'-triphosphate + ADP. Major role in the synthesis of nucleoside triphosphates other than ATP. The ATP gamma phosphate is transferred to the NDP beta phosphate via a ping-pong mechanism, using a phosphorylated active-site intermediate. The chain is Nucleoside diphosphate kinase (ndk1) from Aspergillus fumigatus (strain ATCC MYA-4609 / CBS 101355 / FGSC A1100 / Af293) (Neosartorya fumigata).